A 352-amino-acid chain; its full sequence is MTFVRELEVASQNSRAFNVTLWFIFIFGLLKLVPFALRFLSMVFDLFVLPPVNYAKYGCKAGDYAVVTGASDGIGKEFASQLASKGFNLVLISRTESKLVALKDELEGKFNIKAKILAIDISADSKDNYNKIYSLCDDLPISILVNNVGQSHSIPVPFLATEEEEMRNIITINNTATLMITQIIAPIIIRTVKKHRESGDKKLKSQRGLILTMGSFGGLIPTPLLATYSGSKAFLQNWSSSLAGELAADNVDVELVLSYLVTSAMSKVRRTSMMIPNPRTFVKSTLRNIGRRCGAQDRYGTITPFWSHAIYHFVIEELFGVYARVVNEINYKFHKSIRIRAVRKAVREAKQN.

The chain crosses the membrane as a helical span at residues 20 to 40; the sequence is TLWFIFIFGLLKLVPFALRFL. The NADP(+) site is built by Val-66, Asp-120, Asn-147, Tyr-228, Lys-232, Val-261, and Ser-263. Tyr-228 acts as the Proton donor in catalysis. Lys-232 functions as the Lowers pKa of active site Tyr in the catalytic mechanism.

The protein belongs to the short-chain dehydrogenases/reductases (SDR) family.

The protein localises to the endoplasmic reticulum membrane. It catalyses the reaction a very-long-chain (3R)-3-hydroxyacyl-CoA + NADP(+) = a very-long-chain 3-oxoacyl-CoA + NADPH + H(+). It participates in lipid metabolism; fatty acid biosynthesis. In terms of biological role, component of the microsomal membrane bound fatty acid elongation system, which produces the 26-carbon very long-chain fatty acids (VLCFA) from palmitate. Catalyzes the reduction of the 3-ketoacyl-CoA intermediate that is formed in each cycle of fatty acid elongation. VLCFAs serve as precursors for ceramide and sphingolipids. The polypeptide is Very-long-chain 3-oxoacyl-CoA reductase (Candida glabrata (strain ATCC 2001 / BCRC 20586 / JCM 3761 / NBRC 0622 / NRRL Y-65 / CBS 138) (Yeast)).